The chain runs to 62 residues: Large ribosomal subunit protein bL32 (62 aa).

Basic residues predominate over residues 1 to 16; the sequence is MAVPKRKTSPSRRGMR. The disordered stretch occupies residues 1-44; that stretch reads MAVPKRKTSPSRRGMRRSADALKAPTYVEDKDSGELRRPHHIDL. Over residues 28–44 the composition is skewed to basic and acidic residues; the sequence is VEDKDSGELRRPHHIDL.

Belongs to the bacterial ribosomal protein bL32 family.

The chain is Large ribosomal subunit protein bL32 from Methylorubrum extorquens (strain CM4 / NCIMB 13688) (Methylobacterium extorquens).